Consider the following 296-residue polypeptide: Protoheme IX farnesyltransferase 1 (296 aa).

Transmembrane regions (helical) follow at residues 14–34 (IVLLLVITAVTTMYAGDALSA), 41–61 (LWDYAHLMAAGALASAGSSAL), 86–106 (IGENIVLAYGLAISSAAVVYA), 108–128 (FLLNAPTAFFIALGIFSYVII), 141–161 (IVIGGIAGSAASWAGWTAATG), 165–185 (LLGFLIGFLVFVWTPSHFWCL), 230–250 (AFGMGLVYLVIAVASGGLMLV), and 274–294 (YLTIIFAAVALDAAFHYPFPF).

Belongs to the UbiA prenyltransferase family. Protoheme IX farnesyltransferase subfamily.

The protein localises to the cell membrane. The catalysed reaction is heme b + (2E,6E)-farnesyl diphosphate + H2O = Fe(II)-heme o + diphosphate. It participates in porphyrin-containing compound metabolism; heme O biosynthesis; heme O from protoheme: step 1/1. Functionally, converts heme B (protoheme IX) to heme O by substitution of the vinyl group on carbon 2 of heme B porphyrin ring with a hydroxyethyl farnesyl side group. The chain is Protoheme IX farnesyltransferase 1 from Cenarchaeum symbiosum (strain A).